The primary structure comprises 256 residues: Putative adhesin P1-like protein MPN_132 (256 aa).

The span at 56–72 (AVSESQAATSSTTTTAT) shows a compositional bias: low complexity. Disordered stretches follow at residues 56–115 (AVSE…PYLH) and 149–235 (FGTD…EVVG). Positions 96-112 (KASTQGSGQTNSQNTSP) are enriched in polar residues. Composition is skewed to low complexity over residues 155-179 (TQPQ…LGSV) and 211-222 (STSDGNTSSTNN).

The protein belongs to the adhesin P1 family.

The protein is Putative adhesin P1-like protein MPN_132 of Mycoplasma pneumoniae (strain ATCC 29342 / M129 / Subtype 1) (Mycoplasmoides pneumoniae).